The chain runs to 609 residues: MCGIFGYLGSKLAIPVVLDGLAKLEYRGYDSAGLASIHLGDLFVRKTIGRVDELRHSLEQENIQSLLAIGHTRWATHGVPTVSNAHPHVDENRTCAVVHNGIIENFKELKSFLLSEGVSFSSDTDSEVIAQLFAYRYQTTADLIHSFSWTLSQLQGSFSCGLIHKDHPDVLLCAAQESPLILGLGEGENFIASDSRAFLKHTQSIQALASGELAIVGLGHEVETYNFALKRISKPVRQVTYTDAGSDKQGYSYYMLKEIYEQPEVLERLVHKYLDPQGHISEKFLQGFPLEDFDEISIVACGSSYHAGFLAKYIIESLVSIPVHVEVASEFRYRRAYIGQKTLAILISQSGETADTLAALKEFRRRQVSCVLGICNVEESALATGVDHCLFLEAGIEIGVASTKAFTAQLLLLILLGLKLTISKHTLSLTEHCACGKGLLELPELCNRLLANENLHSWAHTYCNEDRFIFLGRRLMYPICMEAALKLKEIAYVEANCYPAGEMKHGPIALISKGSPVITFCGDSTVYEKMVGCIMEVKARQAHVIAVASEAQEDIAAVSDFQIYVPNSHSLASPILYTIVGQIMAYTMALKKGNEIDCPRNLAKSVTVE.

The active-site Nucleophile; for GATase activity is cysteine 2. Residues cysteine 2 to glycine 219 form the Glutamine amidotransferase type-2 domain. SIS domains follow at residues isoleucine 280–threonine 426 and tryptophan 458–proline 599. Lysine 604 acts as the For Fru-6P isomerization activity in catalysis.

In terms of assembly, homodimer.

The protein resides in the cytoplasm. It catalyses the reaction D-fructose 6-phosphate + L-glutamine = D-glucosamine 6-phosphate + L-glutamate. In terms of biological role, catalyzes the first step in hexosamine metabolism, converting fructose-6P into glucosamine-6P using glutamine as a nitrogen source. In Chlamydia abortus (strain DSM 27085 / S26/3) (Chlamydophila abortus), this protein is Glutamine--fructose-6-phosphate aminotransferase [isomerizing].